Reading from the N-terminus, the 528-residue chain is Protein MGF 505-7R (528 aa).

Belongs to the asfivirus MGF 505 family. As to quaternary structure, interacts with host STING1. Interacts with host JAK1; this interaction leads to JAK1 degradation. Interacts with host JAK2; this interaction leads to JAK2 degradation. Interacts with host RELA; this interaction inhibits NF-kappa-B promoter activity.

It is found in the host cytoplasm. Its function is as follows. Plays a role in virus cell tropism, and may be required for efficient virus replication in macrophages. Interferes with host NF-kappa-B promoter activity mediated by TLR8. Mechanistically, inhibits the phosphorylation and subsequent nuclear translocation of host NF-kappa-B RELA subunit downstream of TLR8. Promotes the expression of the autophagy-related protein host ULK1 to degrade host STING and inhibit the interferon response. Also inhibits JAK1- and JAK2-mediated signaling and thus negatively regulates the IFN-gamma signaling. The chain is Protein MGF 505-7R from African swine fever virus (isolate Pig/Kenya/KEN-50/1950) (ASFV).